The sequence spans 156 residues: Transcription inhibitor protein Gfh1 (156 aa).

A coiled-coil region spans residues 1-74 (MAREVKLTKA…LEDILSRAVI (74 aa)).

Belongs to the GreA/GreB family. In terms of assembly, interacts with RNAP.

Functionally, inhibits all catalytic activities of RNA polymerase (RNAP) by partially occluding its substrate-binding site and preventing NTP binding. The sequence is that of Transcription inhibitor protein Gfh1 (gfh1) from Thermus thermophilus (strain ATCC BAA-163 / DSM 7039 / HB27).